The following is a 278-amino-acid chain: Fasciclin-like arabinogalactan protein 5 (278 aa).

Residues 1-24 (MGLKASLSLLSLTILLVFSKVVTA) form the signal peptide. The FAS1 domain occupies 25 to 169 (NNITLAFQKY…LSIIQITMPI (145 aa)). Residues asparagine 26, asparagine 74, asparagine 126, and asparagine 159 are each glycosylated (N-linked (GlcNAc...) asparagine). The interval 199–257 (VVPAPGPAADDNSPDSAVPKTPPAPATDTPEADSPAPAPSADNEKIEAADKAKPSSSAS) is disordered. Low complexity predominate over residues 224–239 (ATDTPEADSPAPAPSA). Residues 240-251 (DNEKIEAADKAK) are compositionally biased toward basic and acidic residues. Residue serine 255 is the site of GPI-anchor amidated serine attachment. The propeptide at 256–278 (ASKAGWSFDVILLLAFLASFAGF) is removed in mature form.

Belongs to the fasciclin-like AGP family.

The protein localises to the cell membrane. Functionally, may be a cell surface adhesion protein. This is Fasciclin-like arabinogalactan protein 5 (FLA5) from Arabidopsis thaliana (Mouse-ear cress).